A 316-amino-acid polypeptide reads, in one-letter code: Transaldolase (316 aa).

The Schiff-base intermediate with substrate role is filled by K132.

This sequence belongs to the transaldolase family. Type 1 subfamily.

The protein resides in the cytoplasm. It catalyses the reaction D-sedoheptulose 7-phosphate + D-glyceraldehyde 3-phosphate = D-erythrose 4-phosphate + beta-D-fructose 6-phosphate. The protein operates within carbohydrate degradation; pentose phosphate pathway; D-glyceraldehyde 3-phosphate and beta-D-fructose 6-phosphate from D-ribose 5-phosphate and D-xylulose 5-phosphate (non-oxidative stage): step 2/3. Its function is as follows. Transaldolase is important for the balance of metabolites in the pentose-phosphate pathway. This is Transaldolase from Vibrio cholerae serotype O1 (strain ATCC 39315 / El Tor Inaba N16961).